The primary structure comprises 447 residues: Tubulin beta-2 chain (447 aa).

Residues Gln-9, Glu-67, Ser-136, Gly-140, Thr-141, Gly-142, Asn-202, and Asn-224 each coordinate GTP. Glu-67 contacts Mg(2+). Residues 411–425 show a composition bias toward polar residues; it reads SNMNDLVSEYQQYQD. A disordered region spans residues 411-447; that stretch reads SNMNDLVSEYQQYQDATAEEDEYEEEEEDYHQEHDEM. Residues 427-440 show a composition bias toward acidic residues; the sequence is TAEEDEYEEEEEDY.

It belongs to the tubulin family. In terms of assembly, dimer of alpha and beta chains. A typical microtubule is a hollow water-filled tube with an outer diameter of 25 nm and an inner diameter of 15 nM. Alpha-beta heterodimers associate head-to-tail to form protofilaments running lengthwise along the microtubule wall with the beta-tubulin subunit facing the microtubule plus end conferring a structural polarity. Microtubules usually have 13 protofilaments but different protofilament numbers can be found in some organisms and specialized cells. Mg(2+) serves as cofactor.

It is found in the cytoplasm. Its subcellular location is the cytoskeleton. Its function is as follows. Tubulin is the major constituent of microtubules, a cylinder consisting of laterally associated linear protofilaments composed of alpha- and beta-tubulin heterodimers. Microtubules grow by the addition of GTP-tubulin dimers to the microtubule end, where a stabilizing cap forms. Below the cap, tubulin dimers are in GDP-bound state, owing to GTPase activity of alpha-tubulin. The protein is Tubulin beta-2 chain (TUBB2) of Pisum sativum (Garden pea).